The primary structure comprises 278 residues: 4-deoxy-L-threo-5-hexosulose-uronate ketol-isomerase (278 aa).

Zn(2+) is bound by residues H196, H198, E203, and H245.

It belongs to the KduI family. It depends on Zn(2+) as a cofactor.

The enzyme catalyses 5-dehydro-4-deoxy-D-glucuronate = 3-deoxy-D-glycero-2,5-hexodiulosonate. It functions in the pathway glycan metabolism; pectin degradation; 2-dehydro-3-deoxy-D-gluconate from pectin: step 4/5. Functionally, catalyzes the isomerization of 5-dehydro-4-deoxy-D-glucuronate to 3-deoxy-D-glycero-2,5-hexodiulosonate. The polypeptide is 4-deoxy-L-threo-5-hexosulose-uronate ketol-isomerase (Yersinia pestis bv. Antiqua (strain Antiqua)).